The primary structure comprises 346 residues: Enkurin domain-containing protein 1 (346 aa).

3 disordered regions span residues 1–24 (MCEG…DYYR), 88–107 (SGVS…NLRR), and 113–132 (RRFQ…PLKA). Position 91 is a phosphoserine (serine 91). 2 stretches are compositionally biased toward basic and acidic residues: residues 98 to 107 (KDHEKENLRR) and 113 to 125 (RRFQ…REQG). At serine 136 the chain carries Phosphoserine. One can recognise an Enkurin domain in the interval 251-343 (ERRDLWRKEA…IFSRPKVFVK (93 aa)). Residues 259-280 (EAEARQRSQPDPSMPPGHTLMP) are disordered.

In terms of assembly, interacts with alpha-tubulin. Interacts (via central region) with CCP110 (via N-terminal region); competes with CEP97 for binding to CCP110. Widely expressed with highest levels in testis and lung.

The protein localises to the cytoplasm. The protein resides in the cytoskeleton. It is found in the microtubule organizing center. It localises to the centrosome. Its subcellular location is the centriole. The protein localises to the cilium basal body. The protein resides in the cell projection. It is found in the cilium. It localises to the spindle. Its subcellular location is the spindle pole. The protein localises to the cilium axoneme. In terms of biological role, microtubule-binding protein which regulates microtubule organization and stability. Promotes the stability of astral microtubules and facilitates the proper orientation of the mitotic spindle. This allows the oriented division of basal keratinocytes and contributes to epidermal stratification. Required for the assembly of both primary and motile cilia. Destabilizes the interaction between CCP110 and CEP97 by competing with CEP97 for binding to CCP110 which promotes the removal of CCP110 and CEP97 from the mother centriole and allows the initiation of ciliogenesis. This Mus musculus (Mouse) protein is Enkurin domain-containing protein 1 (Enkd1).